A 66-amino-acid polypeptide reads, in one-letter code: U-scoloptoxin(24)-Er2a (66 aa).

The first 23 residues, 1–23, serve as a signal peptide directing secretion; sequence MVKPLHCLIGIVLFLAVLNAGNG. Residues 43–66 are disordered; that stretch reads SLFHGNQRKKRSEEKRFSDMEQTK. A compositionally biased stretch (basic and acidic residues) spans 53–66; sequence RSEEKRFSDMEQTK.

It belongs to the scoloptoxin-24 family. In terms of tissue distribution, expressed by the venom gland.

It is found in the secreted. In Ethmostigmus rubripes (Giant centipede), this protein is U-scoloptoxin(24)-Er2a.